The chain runs to 195 residues: CASP-like protein 1B1 (195 aa).

Over 1–15 (MAKLALAATSGKSCK) the chain is Cytoplasmic. Residues 16–36 (ILLGLRLLAFSATLSAAIVMG) traverse the membrane as a helical segment. Residues 37–67 (LNKETETFVVGKVGNTPIKATFTAKFDHTPA) lie on the Extracellular side of the membrane. Residues 68-88 (FVFFVVANAMVSFHNLLMIAL) form a helical membrane-spanning segment. Residues 89 to 104 (QIFGGKMEFTGFRLLS) lie on the Cytoplasmic side of the membrane. The chain crosses the membrane as a helical span at residues 105–125 (VAILDMLNVTLISAAANAAAF). Topologically, residues 126 to 154 (MAEVGKNGNKHARWDKICDRFATYCDHGA) are extracellular. The chain crosses the membrane as a helical span at residues 155-175 (GALIAAFAGVILMLIISAASI). Over 176-195 (SRLAQQNKCCSTTASPSVVP) the chain is Cytoplasmic.

It belongs to the Casparian strip membrane proteins (CASP) family. In terms of assembly, homodimer and heterodimers.

It is found in the cell membrane. This Arabidopsis lyrata subsp. lyrata (Lyre-leaved rock-cress) protein is CASP-like protein 1B1.